The primary structure comprises 144 residues: Large ribosomal subunit protein uL14 (144 aa).

The protein belongs to the universal ribosomal protein uL14 family. In terms of assembly, part of the 50S ribosomal subunit. Forms a cluster with proteins L3 and L24e, part of which may contact the 16S rRNA in 2 intersubunit bridges.

Functionally, binds to 23S rRNA. Forms part of two intersubunit bridges in the 70S ribosome. This is Large ribosomal subunit protein uL14 from Cenarchaeum symbiosum (strain A).